The following is an 87-amino-acid chain: Small ribosomal subunit protein bS16 (87 aa).

The protein belongs to the bacterial ribosomal protein bS16 family.

This chain is Small ribosomal subunit protein bS16, found in Buchnera aphidicola subsp. Baizongia pistaciae (strain Bp).